Here is a 61-residue protein sequence, read N- to C-terminus: Small ribosomal subunit protein uS14 (61 aa).

Zn(2+) contacts are provided by cysteine 24, cysteine 27, cysteine 40, and cysteine 43.

Belongs to the universal ribosomal protein uS14 family. Zinc-binding uS14 subfamily. In terms of assembly, part of the 30S ribosomal subunit. Contacts proteins S3 and S10. Zn(2+) serves as cofactor.

In terms of biological role, binds 16S rRNA, required for the assembly of 30S particles and may also be responsible for determining the conformation of the 16S rRNA at the A site. This is Small ribosomal subunit protein uS14 from Nautilia profundicola (strain ATCC BAA-1463 / DSM 18972 / AmH).